A 164-amino-acid chain; its full sequence is Interferon gamma (164 aa).

Positions Met1 to Gly19 are cleaved as a signal peptide. 2 N-linked (GlcNAc...) asparagine glycosylation sites follow: Asn42 and Asn61.

It belongs to the type II (or gamma) interferon family. In terms of assembly, homodimer.

The protein localises to the secreted. Produced by lymphocytes activated by specific antigens or mitogens. IFN-gamma, in addition to having antiviral activity, has important immunoregulatory functions. It is a potent activator of macrophages, it has antiproliferative effects on transformed cells and it can potentiate the antiviral and antitumor effects of the type I interferons. This chain is Interferon gamma (IFNG), found in Numida meleagris (Helmeted guineafowl).